The sequence spans 202 residues: Small ribosomal subunit protein uS5 (202 aa).

The region spanning 50–113 is the S5 DRBM domain; it reads LKQEILNINV…REAKLNLTPV (64 aa).

The protein belongs to the universal ribosomal protein uS5 family. Part of the 30S ribosomal subunit. Contacts protein S4.

With S4 and S12 plays an important role in translational accuracy. This Pyrobaculum islandicum (strain DSM 4184 / JCM 9189 / GEO3) protein is Small ribosomal subunit protein uS5.